Here is a 336-residue protein sequence, read N- to C-terminus: NmrA-like family domain-containing oxidoreductase FrzB (336 aa).

Lys-135 lines the NADP(+) pocket.

The protein belongs to the NmrA-type oxidoreductase family.

The enzyme catalyses 4-{[(2S,5S)-5-[(4-hydroxyphenyl)methyl]-2,5-dihydropyrazin-2-yl]methyl}phenol + 2 NADPH + 2 H(+) = (S,S)-2,5-di-(p-hydroxybenzyl)piperazine + 2 NADP(+). It functions in the pathway secondary metabolite biosynthesis. NmrA-like family domain-containing oxidoreductase; part of the gene cluster that mediates the biosynthesis of the alkaloid (-)-FR901483, a potent immunosuppressant that shows efficacy in animal models and a probable inhibitor of purine nucleotide biosynthesis by targeting phosphoribosylpyrophosphate amidotransferase (PPAT). Within the pathway, FrzB catalyzes the reduction of 4-{[(2S,5S)-5-[(4-hydroxyphenyl)methyl]-2,5-dihydropyrazin-2-yl]methyl}phenol to produce the (S,S)-dityrosyl-piperazine intermediate. The biosynthesis of (-)-FR901483 starts with the condensation of two L-tyrosines to yield (S,S)-dityrosyl-piperazine. This process occurs in 3 steps with the non-canonical nonribosomal peptide synthetase FrzA catalyzing the reduction of L-tyrosine into L-tyrosinal, the spontaneous condensation of 2 L-tyrosinal units, and the subsequent reduction by the NmrA-like family domain-containing oxidoreductase FrzB. The cytochrome P450 monooxygenase FrzC then performs coupling between N10 and C1' to morph the piperazine into a 1,4-diazabicyclo[3.2.1]octane spiro-fused to a 2,5-cyclohexadienone. The dienone portion is further reduced to cyclohexanone by the flavin-dependent reductase FrzD. The methyltranserases (MTs) FrzE and FrzF are then involved in the methylation at the C10' amine and the C4 phenolic oxygen, respectively. The order of the two MTs appear to be interchangeable. Cleavage of the C9-N10' bond by the dioxygenase FrzG then leads to formation of a conjugated iminium. In addition to the oxidation of C9, an additional dehydrogenation between C7 and C8 can occur to give a likely shunt product. The next biosynthetic step is the intramolecular aldol condensation catalyzed by the newly identified aldolase FrzH to yield an aza-tricyclic product with the formation of a C9-C3' bond. The short-chain dehydrogenase/reductase FrzI then produces dephospho-(-)-FR901483 that is phosphorylated at C4'-OH into (-)-FR901483 by the phosphotransferase FrzJ. The polypeptide is NmrA-like family domain-containing oxidoreductase FrzB (Cladobotryum sp).